The sequence spans 519 residues: Cyclic AMP-responsive element-binding protein 3-like protein 2 (519 aa).

Topologically, residues 1-374 (MEIMDSGEPF…SCRVTGTQTS (374 aa)) are cytoplasmic. 3 disordered regions span residues 58–77 (GRGDAMDTEEELTRASPVPP), 85–121 (YSLCGDSRPQSPLSHLPGEPGSDAADSESDEWPMEQE), and 193–261 (GLEC…SGPL). Residues 109 to 119 (ADSESDEWPME) show a composition bias toward acidic residues. Low complexity-rich tracts occupy residues 205–217 (SSVGSDSEGSQSP) and 240–249 (PSSLSSSPLL). One can recognise a bZIP domain in the interval 291 to 354 (ALKKIRRKIK…KSLLQQLHSL (64 aa)). Residues 293–322 (KKIRRKIKNKISAQESRRKKKEYVDALEKK) form a basic motif region. The segment at 333 to 354 (LRRKVENLECTNKSLLQQLHSL) is leucine-zipper. A helical; Signal-anchor for type II membrane protein membrane pass occupies residues 375–395 (TCLMVVVLCFSLFLGSFYPGL). Residues 396 to 519 (SPCSSITKAD…QLDRTVNETS (124 aa)) are Lumenal-facing. The S1P recognition signature appears at 423–426 (RSLL). Residues Asn485, Asn503, and Asn516 are each glycosylated (N-linked (GlcNAc...) asparagine).

This sequence belongs to the bZIP family. ATF subfamily. As to quaternary structure, binds DNA as a dimer. In terms of processing, upon ER stress, translocated to the Golgi apparatus, where it is processed by regulated intramembrane proteolysis (RIP) to release the cytosol-facing N-terminal transcription factor domain. The cleavage is performed sequentially by site-1 and site-2 proteases (S1P/mbtps1 and S2P/mbtps2).

Its subcellular location is the endoplasmic reticulum membrane. The protein localises to the nucleus. Transcription factor involved in unfolded protein response (UPR). In the absence of endoplasmic reticulum (ER) stress, inserted into ER membranes, with N-terminal DNA-binding and transcription activation domains oriented toward the cytosolic face of the membrane. In response to ER stress, transported to the Golgi, where it is cleaved in a site-specific manner by resident proteases S1P/mbtps1 and S2P/mbtps2. The released N-terminal cytosolic domain is translocated to the nucleus to effect transcription of specific target genes. Plays a critical role in chondrogenesis. May protect neuroblastoma cells from ER stress-induced death. In vitro activates transcription of target genes via direct binding to the CRE site. In Danio rerio (Zebrafish), this protein is Cyclic AMP-responsive element-binding protein 3-like protein 2 (creb3l2).